The chain runs to 207 residues: Serotonin N-acetyltransferase (207 aa).

The tract at residues Met-1–Arg-28 is disordered. Thr-31 is subject to Phosphothreonine; by PKA. Positions Ser-35–Ser-194 constitute an N-acetyltransferase domain. A substrate-binding site is contributed by Leu-124. Residues Leu-124–Val-126 and Gln-132–Pro-137 contribute to the acetyl-CoA site. Met-159 serves as a coordination point for substrate. An acetyl-CoA-binding site is contributed by Tyr-168–Arg-170. The residue at position 205 (Ser-205) is a Phosphoserine.

Belongs to the acetyltransferase family. AANAT subfamily. As to quaternary structure, monomer. Interacts with several 14-3-3 proteins, including YWHAB, YWHAE, YWHAG and YWHAZ, preferentially when phosphorylated at Thr-31. Phosphorylation on Ser-205 also allows binding to YWHAZ, but with lower affinity. The interaction with YWHAZ considerably increases affinity for arylalkylamines and acetyl-CoA and protects the enzyme from dephosphorylation and proteasomal degradation. It may also prevent thiol-dependent inactivation. Post-translationally, cAMP-dependent phosphorylation on both N-terminal Thr-31 and C-terminal Ser-205 regulates AANAT activity by promoting interaction with 14-3-3 proteins. As to expression, highly expressed in pineal gland and at lower levels in the retina. Weak expression in several brain regions and in the pituitary gland.

It localises to the cytoplasm. The catalysed reaction is a 2-arylethylamine + acetyl-CoA = an N-acetyl-2-arylethylamine + CoA + H(+). It functions in the pathway aromatic compound metabolism; melatonin biosynthesis; melatonin from serotonin: step 1/2. Controls the night/day rhythm of melatonin production in the pineal gland. Catalyzes the N-acetylation of serotonin into N-acetylserotonin, the penultimate step in the synthesis of melatonin. This chain is Serotonin N-acetyltransferase (AANAT), found in Homo sapiens (Human).